Here is a 185-residue protein sequence, read N- to C-terminus: Elongation factor P (185 aa).

This sequence belongs to the elongation factor P family.

The protein localises to the cytoplasm. It functions in the pathway protein biosynthesis; polypeptide chain elongation. In terms of biological role, involved in peptide bond synthesis. Stimulates efficient translation and peptide-bond synthesis on native or reconstituted 70S ribosomes in vitro. Probably functions indirectly by altering the affinity of the ribosome for aminoacyl-tRNA, thus increasing their reactivity as acceptors for peptidyl transferase. In Burkholderia cenocepacia (strain HI2424), this protein is Elongation factor P.